The sequence spans 360 residues: Glycerol-1-phosphate dehydrogenase [NAD(P)+] (360 aa).

Residues 108 to 112 (GRVID) and 130 to 133 (TAAS) contribute to the NAD(+) site. Aspartate 135 contributes to the substrate binding site. Serine 139 is an NAD(+) binding site. Aspartate 182 contributes to the substrate binding site. Zn(2+)-binding residues include aspartate 182 and histidine 262. Histidine 266 is a binding site for substrate. Zn(2+) is bound at residue histidine 278.

It belongs to the glycerol-1-phosphate dehydrogenase family. Zn(2+) serves as cofactor.

Its subcellular location is the cytoplasm. It catalyses the reaction sn-glycerol 1-phosphate + NAD(+) = dihydroxyacetone phosphate + NADH + H(+). The catalysed reaction is sn-glycerol 1-phosphate + NADP(+) = dihydroxyacetone phosphate + NADPH + H(+). Its pathway is membrane lipid metabolism; glycerophospholipid metabolism. In terms of biological role, catalyzes the NAD(P)H-dependent reduction of dihydroxyacetonephosphate (DHAP or glycerone phosphate) to glycerol 1-phosphate (G1P). The G1P thus generated is used as the glycerophosphate backbone of phospholipids in the cellular membranes of Archaea. The polypeptide is Glycerol-1-phosphate dehydrogenase [NAD(P)+] (Methanoculleus marisnigri (strain ATCC 35101 / DSM 1498 / JR1)).